Here is a 337-residue protein sequence, read N- to C-terminus: Ketol-acid reductoisomerase (NADP(+)) (337 aa).

The KARI N-terminal Rossmann domain maps to 1 to 180 (MQVYYDKDAD…GGTKGGVIET (180 aa)). Residues 24–27 (YGSQ), arginine 47, and serine 51 each bind NADP(+). Histidine 106 is a catalytic residue. Glycine 132 contributes to the NADP(+) binding site. In terms of domain architecture, KARI C-terminal knotted spans 181–326 (TFREETETDL…AQLRAMMPWI (146 aa)). 4 residues coordinate Mg(2+): aspartate 189, glutamate 193, glutamate 225, and glutamate 229. Residue serine 250 coordinates substrate.

Belongs to the ketol-acid reductoisomerase family. Requires Mg(2+) as cofactor.

It carries out the reaction (2R)-2,3-dihydroxy-3-methylbutanoate + NADP(+) = (2S)-2-acetolactate + NADPH + H(+). It catalyses the reaction (2R,3R)-2,3-dihydroxy-3-methylpentanoate + NADP(+) = (S)-2-ethyl-2-hydroxy-3-oxobutanoate + NADPH + H(+). Its pathway is amino-acid biosynthesis; L-isoleucine biosynthesis; L-isoleucine from 2-oxobutanoate: step 2/4. The protein operates within amino-acid biosynthesis; L-valine biosynthesis; L-valine from pyruvate: step 2/4. Involved in the biosynthesis of branched-chain amino acids (BCAA). Catalyzes an alkyl-migration followed by a ketol-acid reduction of (S)-2-acetolactate (S2AL) to yield (R)-2,3-dihydroxy-isovalerate. In the isomerase reaction, S2AL is rearranged via a Mg-dependent methyl migration to produce 3-hydroxy-3-methyl-2-ketobutyrate (HMKB). In the reductase reaction, this 2-ketoacid undergoes a metal-dependent reduction by NADPH to yield (R)-2,3-dihydroxy-isovalerate. This chain is Ketol-acid reductoisomerase (NADP(+)), found in Neisseria meningitidis serogroup C (strain 053442).